The chain runs to 318 residues: Ornithine carbamoyltransferase (318 aa).

Residues 63 to 66 (STRT), Q90, R114, and 141 to 144 (HPCQ) contribute to the carbamoyl phosphate site. Residues N172, D235, and 239–240 (SM) each bind L-ornithine. Carbamoyl phosphate-binding positions include 275–276 (CL) and R303.

Belongs to the aspartate/ornithine carbamoyltransferase superfamily. OTCase family.

The protein resides in the cytoplasm. It catalyses the reaction carbamoyl phosphate + L-ornithine = L-citrulline + phosphate + H(+). Its pathway is amino-acid biosynthesis; L-arginine biosynthesis; L-arginine from L-ornithine and carbamoyl phosphate: step 1/3. Reversibly catalyzes the transfer of the carbamoyl group from carbamoyl phosphate (CP) to the N(epsilon) atom of ornithine (ORN) to produce L-citrulline. This chain is Ornithine carbamoyltransferase, found in Prochlorococcus marinus (strain MIT 9313).